We begin with the raw amino-acid sequence, 253 residues long: tRNA (guanine-N(1)-)-methyltransferase (253 aa).

S-adenosyl-L-methionine contacts are provided by residues Gly116 and 136-141; that span reads VGDYIL.

It belongs to the RNA methyltransferase TrmD family. Homodimer.

It localises to the cytoplasm. The enzyme catalyses guanosine(37) in tRNA + S-adenosyl-L-methionine = N(1)-methylguanosine(37) in tRNA + S-adenosyl-L-homocysteine + H(+). In terms of biological role, specifically methylates guanosine-37 in various tRNAs. In Colwellia psychrerythraea (strain 34H / ATCC BAA-681) (Vibrio psychroerythus), this protein is tRNA (guanine-N(1)-)-methyltransferase.